A 1047-amino-acid chain; its full sequence is FACT complex subunit SPT16 (1047 aa).

The residue at position 2 (A2) is an N-acetylalanine. N6-acetyllysine is present on K139. S188 carries the post-translational modification Phosphoserine. N6-acetyllysine occurs at positions 196 and 223. Position 455 is a phosphoserine (S455). A coiled-coil region spans residues 465–507; it reads RNEMTAEEKRRAHQKELAAQLNEEAKRRLTEQKGEQQIQKARK. Residues 491–518 form a disordered region; the sequence is RRLTEQKGEQQIQKARKSNVSYKNPSLM. Residue K497 forms a Glycyl lysine isopeptide (Lys-Gly) (interchain with G-Cter in SUMO2) linkage. The segment covering 499-514 has biased composition (polar residues); it reads EQQIQKARKSNVSYKN. S508 is subject to Phosphoserine. K513 carries the post-translational modification N6-acetyllysine; alternate. K513 is covalently cross-linked (Glycyl lysine isopeptide (Lys-Gly) (interchain with G-Cter in SUMO2); alternate). K647 participates in a covalent cross-link: Glycyl lysine isopeptide (Lys-Gly) (interchain with G-Cter in SUMO2). Phosphoserine occurs at positions 650 and 658. An N6-acetyllysine mark is found at K732 and K786. T903 bears the Phosphothreonine mark. N6-acetyllysine is present on K904. The segment at 918-1047 is disordered; that stretch reads EQGGWSFLEP…SSAPPKKKRK (130 aa). Over residues 927–973 the composition is skewed to acidic residues; the sequence is PEGEGSDAEDGDSESEIEDETFNPSEDDYEEEEEDSDEDYSSEAEES. S979, S982, S986, and S1015 each carry phosphoserine. Positions 985–1005 are enriched in basic and acidic residues; it reads ESGKDWDELEEEARKADRESR. Low complexity predominate over residues 1024–1039; it reads VHSSGRGSNRGSRHSS.

Belongs to the peptidase M24 family. SPT16 subfamily. As to quaternary structure, interacts with MYOG (via C-terminal region). Component of the FACT complex, a stable heterodimer of SSRP1 and SUPT16H. Also a component of a CK2-SPT16-SSRP1 complex which forms following UV irradiation, composed of SSRP1, SUPT16H, CSNK2A1, CSNK2A2 and CSNK2B. Interacts with NEK9. Binds to histone H2A-H2B. Identified in a centromere complex containing histones H2A, H2B and H4, and at least CENPA, CENPB, CENPC, CENPT, CENPN, HJURP, SUPT16H, SSRP1 and RSF1. Interacts with GTF2E2. In terms of processing, ADP-ribosylated. ADP-ribosylation by PARP1 is induced by genotoxic stress and correlates with dissociation of FACT from chromatin. In terms of tissue distribution, widely expressed. Expressed in brain, liver, heart, kidneys, lungs, spleen, thymus, ovary, and testes, with highest levels of expression observed in thymus.

Its subcellular location is the nucleus. The protein localises to the chromosome. Functionally, component of the FACT complex, a general chromatin factor that acts to reorganize nucleosomes. The FACT complex is involved in multiple processes that require DNA as a template such as mRNA elongation, DNA replication and DNA repair. During transcription elongation the FACT complex acts as a histone chaperone that both destabilizes and restores nucleosomal structure. It facilitates the passage of RNA polymerase II and transcription by promoting the dissociation of one histone H2A-H2B dimer from the nucleosome, then subsequently promotes the reestablishment of the nucleosome following the passage of RNA polymerase II. The FACT complex is probably also involved in phosphorylation of 'Ser-392' of p53/TP53 via its association with CK2 (casein kinase II). This is FACT complex subunit SPT16 (Supt16h) from Mus musculus (Mouse).